A 481-amino-acid chain; its full sequence is Ribulose bisphosphate carboxylase large chain (481 aa).

The propeptide occupies 1 to 2; it reads MS. Proline 3 is modified (N-acetylproline). Position 14 is an N6,N6,N6-trimethyllysine (lysine 14). Positions 123 and 173 each coordinate substrate. Residue lysine 175 is the Proton acceptor of the active site. Lysine 177 is a binding site for substrate. Mg(2+) contacts are provided by lysine 201, aspartate 203, and glutamate 204. An N6-carboxylysine modification is found at lysine 201. Histidine 294 serves as the catalytic Proton acceptor. Residues arginine 295, histidine 327, and serine 379 each contribute to the substrate site.

Belongs to the RuBisCO large chain family. Type I subfamily. Heterohexadecamer of 8 large chains and 8 small chains; disulfide-linked. The disulfide link is formed within the large subunit homodimers. Mg(2+) is required as a cofactor. In terms of processing, the disulfide bond which can form in the large chain dimeric partners within the hexadecamer appears to be associated with oxidative stress and protein turnover.

It localises to the plastid. The catalysed reaction is 2 (2R)-3-phosphoglycerate + 2 H(+) = D-ribulose 1,5-bisphosphate + CO2 + H2O. It catalyses the reaction D-ribulose 1,5-bisphosphate + O2 = 2-phosphoglycolate + (2R)-3-phosphoglycerate + 2 H(+). In terms of biological role, ruBisCO catalyzes two reactions: the carboxylation of D-ribulose 1,5-bisphosphate, the primary event in carbon dioxide fixation, as well as the oxidative fragmentation of the pentose substrate in the photorespiration process. Both reactions occur simultaneously and in competition at the same active site. The polypeptide is Ribulose bisphosphate carboxylase large chain (Cuscuta gronovii (Common dodder)).